Consider the following 424-residue polypeptide: Omega-6 fatty acid desaturase, chloroplastic (424 aa).

The transit peptide at 1–63 (MACTLADSLL…TRNKVTVIHA (63 aa)) directs the protein to the chloroplast. An N-acetylvaline modification is found at V64. A Histidine box-1 motif is present at residues 165-169 (HDCAH). The Histidine box-2 motif lies at 201 to 205 (HDRHH). Positions 361–365 (HIPHH) match the Histidine box-3 motif.

The protein belongs to the fatty acid desaturase type 1 family.

It localises to the plastid. Its subcellular location is the chloroplast membrane. It carries out the reaction a (9Z)-octadecenoyl-containing glycerolipid + 2 reduced [2Fe-2S]-[ferredoxin] + O2 + 2 H(+) = a (9Z,12Z)-octadecadienoyl-containing glycerolipid + 2 oxidized [2Fe-2S]-[ferredoxin] + 2 H2O. The protein operates within lipid metabolism; polyunsaturated fatty acid biosynthesis. Its function is as follows. Chloroplast omega-6 fatty acid desaturase introduces the second double bond in the biosynthesis of 16:3 and 18:3 fatty acids, important constituents of plant membranes. It is thought to use ferredoxin as an electron donor and to act on fatty acids esterified to galactolipids, sulfolipids and phosphatidylglycerol. The protein is Omega-6 fatty acid desaturase, chloroplastic of Glycine max (Soybean).